Here is a 469-residue protein sequence, read N- to C-terminus: MITTRFAPSPTGFLHVGGVRTALFSWLYARHNNGKFLLRIEDTDLERSTQAAVDAILDGMSWLGLKNDEEIYYQTKRFDRYHEVIKQLIAEGKAYYCNCSKERLDELREHQQANNLKTGYDGKCRDASYIPQEGDSFVVRFKNPQDGLVSWDDAVKGRISISNHELDDMIIQRTDGSPTYNFCVVVDDIDMAITHIIRGDDHVNNTPKQINIYKALNAHVPVFAHVPMILGPDGAKLSKRHGAVNVMQYREDGYLPQAILNYLVRLGWSHGDQEIFSIDEMIKSFNLEHINASPSRFDFDKLKWLNKHYIKESKFEDIRTEVEYHFAKFGLDIANGPDLQDLVAVMAEKVDTLVELTEKSSYFYSDDIVYDEKAVKKHVKTTTGEIFIKLLENFEALETQQWQDPDTLHNVVASTAEQCEVGMGKVGMPLRIAITGSGQSPDIGITLKLLGKEKVLSRLQRAIKELCNS.

Residues 8–18 carry the 'HIGH' region motif; that stretch reads PSPTGFLHVGG. Residues Cys-97, Cys-99, Cys-124, and Asp-126 each coordinate Zn(2+). The 'KMSKS' region signature appears at 236 to 240; that stretch reads KLSKR. Lys-239 lines the ATP pocket.

This sequence belongs to the class-I aminoacyl-tRNA synthetase family. Glutamate--tRNA ligase type 1 subfamily. Monomer. The cofactor is Zn(2+).

It localises to the cytoplasm. It catalyses the reaction tRNA(Glu) + L-glutamate + ATP = L-glutamyl-tRNA(Glu) + AMP + diphosphate. Functionally, catalyzes the attachment of glutamate to tRNA(Glu) in a two-step reaction: glutamate is first activated by ATP to form Glu-AMP and then transferred to the acceptor end of tRNA(Glu). In Francisella philomiragia subsp. philomiragia (strain ATCC 25017 / CCUG 19701 / FSC 153 / O#319-036), this protein is Glutamate--tRNA ligase.